Reading from the N-terminus, the 155-residue chain is Small ribosomal subunit protein uS7 (155 aa).

This sequence belongs to the universal ribosomal protein uS7 family. As to quaternary structure, part of the 30S ribosomal subunit. Contacts proteins S9 and S11.

One of the primary rRNA binding proteins, it binds directly to 16S rRNA where it nucleates assembly of the head domain of the 30S subunit. Is located at the subunit interface close to the decoding center, probably blocks exit of the E-site tRNA. This is Small ribosomal subunit protein uS7 from Thermotoga petrophila (strain ATCC BAA-488 / DSM 13995 / JCM 10881 / RKU-1).